The chain runs to 678 residues: MESMTPISCPTTPRWNQDRPFLTGRFHQETRASSKFADSKRFTLDSSSSGVEQAIGCYDTPVQELIVIDDLLSALVGIEGRYISIKRFHGKEDSIAFQVDPSMDLALQELAKRIFPLCEYYLLIDQFVESSSQFKNGLVNHAFAAALRALLLDYQAMVAQLEHQFRLGRLSIQGLWFYCQPMMGSMRALAAVIQQASTKQFVGSGVLNLLQSQAKAMAGDNSVRSLLEKMTECASNAYLSILERWVYEGIIDDPYGEFFIAENRSLKKESLSQDSTAKYWSQRYSLKDTIPGFLANIAATILTTGKYLNVMRECGHNVQVPISERSKLTIFGSNHHYLECIKAAHEFASIELVNLIKDKYDLVGRLRSIKHYLLLDQGDFLVHFMDIAREELNKKVHEISVEKLQSLLDLALRTTAAAADPRHEDLTCCVDRASLLTTLGMHKDTDSNSIEDPMSITGLETFSLSYKVQWPLSIVISKKALSKYQLIFRFLFHCKHVERQLCGAWQIHQGIRSMNSKGTAILRSSLLCRSMLKFISSLLHYLTFEVLEPNWHVMHDRLQSTRSVDEVIQHHDFFLDKCLRGCLLLLPDVLKKMEKLKSVCLQYAAATQWLISSSIDINSQSHPQKTMIRDTTVTESIFNFEREFNSELQSLGPVLSKGSQAEPYLTHLSQWILGVSKE.

5 triggers nucleus envelope localization regions span residues 63–116 (QELI…RIFP), 118–180 (CEYY…FYCQ), 290–318 (IPGF…GHNV), 472–548 (LSIV…EVLE), and 587–622 (PDVL…SQSH).

This sequence belongs to the TUBGCP family. In terms of assembly, part of the gamma-tubulin complex. Gamma-tubulin complex is composed of gamma-tubulin and GCP proteins (e.g. GCP2 and GCP3). Interacts directly with GCP3.

It is found in the cytoplasm. Its subcellular location is the cytoskeleton. The protein localises to the microtubule organizing center. It localises to the nucleus envelope. The protein resides in the cell cortex. In terms of biological role, gamma-tubulin complex is necessary for microtubule nucleation at the microtubule organizing centers (MTOCs). Required for the positioning of the gamma-tubulin-containing complex on pre-existing microtubules and for the proper organization of cortical arrays. This is Gamma-tubulin complex component 2 (GCP2) from Arabidopsis thaliana (Mouse-ear cress).